We begin with the raw amino-acid sequence, 55 residues long: MSKSKREVIKLISSAGTKHFYTTTKNKSHNLKKIKLKKFDPVIKKHVIYNEAKLK.

Belongs to the bacterial ribosomal protein bL33 family.

The protein is Large ribosomal subunit protein bL33 of Wigglesworthia glossinidia brevipalpis.